A 310-amino-acid chain; its full sequence is Ornithine carbamoyltransferase (310 aa).

Residues 56-59, Gln-83, Arg-107, and 134-137 each bind carbamoyl phosphate; these read STRT and HPCQ. L-ornithine is bound by residues Asn-165, Asp-229, and 233-234; that span reads SM. Carbamoyl phosphate is bound by residues 269–270 and Arg-297; that span reads CL.

The protein belongs to the aspartate/ornithine carbamoyltransferase superfamily. OTCase family.

It is found in the cytoplasm. It catalyses the reaction carbamoyl phosphate + L-ornithine = L-citrulline + phosphate + H(+). It functions in the pathway amino-acid biosynthesis; L-arginine biosynthesis; L-arginine from L-ornithine and carbamoyl phosphate: step 1/3. Its function is as follows. Reversibly catalyzes the transfer of the carbamoyl group from carbamoyl phosphate (CP) to the N(epsilon) atom of ornithine (ORN) to produce L-citrulline. This chain is Ornithine carbamoyltransferase, found in Symbiobacterium thermophilum (strain DSM 24528 / JCM 14929 / IAM 14863 / T).